Here is a 231-residue protein sequence, read N- to C-terminus: Large ribosomal subunit protein uL1 (231 aa).

The protein belongs to the universal ribosomal protein uL1 family. As to quaternary structure, part of the 50S ribosomal subunit.

In terms of biological role, binds directly to 23S rRNA. The L1 stalk is quite mobile in the ribosome, and is involved in E site tRNA release. Its function is as follows. Protein L1 is also a translational repressor protein, it controls the translation of the L11 operon by binding to its mRNA. The sequence is that of Large ribosomal subunit protein uL1 from Acinetobacter baylyi (strain ATCC 33305 / BD413 / ADP1).